The chain runs to 138 residues: U1 small nuclear ribonucleoprotein C (138 aa).

The segment at Phe-4 to Asp-36 adopts a Matrin-type zinc-finger fold. Position 8 is a phosphotyrosine (Tyr-8). The residue at position 17 (Ser-17) is a Phosphoserine. Lys-52 bears the N6-acetyllysine mark. The tract at residues Ile-62–Pro-99 is disordered. Residues Leu-72–Pro-99 are compositionally biased toward pro residues.

Belongs to the U1 small nuclear ribonucleoprotein C family. In terms of assembly, component of the U1 snRNP. The U1 snRNP is composed of the U1 snRNA and the 7 core Sm proteins SNRPB, SNRPD1, SNRPD2, SNRPD3, SNRPE, SNRPF and SNRPG that assemble in a heptameric protein ring on the Sm site of the small nuclear RNA to form the core snRNP, and at least 3 U1 snRNP-specific proteins SNRNP70/U1-70K, SNRPA/U1-A and SNRPC/U1-C. SNRPC/U1-C interacts with U1 snRNA and the 5' splice-site region of the pre-mRNA. Interacts (via N-terminus) with TIA1 (via C-terminus); thereby promoting spliceosomal U1 snRNP recruitment to 5' splice sites.

Its subcellular location is the nucleus. Component of the spliceosomal U1 snRNP, which is essential for recognition of the pre-mRNA 5' splice-site and the subsequent assembly of the spliceosome. SNRPC/U1-C is directly involved in initial 5' splice-site recognition for both constitutive and regulated alternative splicing. The interaction with the 5' splice-site seems to precede base-pairing between the pre-mRNA and the U1 snRNA. Stimulates commitment or early (E) complex formation by stabilizing the base pairing of the 5' end of the U1 snRNA and the 5' splice-site region. This chain is U1 small nuclear ribonucleoprotein C, found in Monodelphis domestica (Gray short-tailed opossum).